Here is a 204-residue protein sequence, read N- to C-terminus: MLRIAIAKGRLMDSLINYLDAIEFTTLSETLKNRERQLLLSVDNIECILVKGSDVPIYVEQGIADIGIVGSDILDERHYNVNNLLDMPFGACHFAVAAKPETTNYRKIATSYVHTAEAYFKSKGIDVELIKLNGSVELACVVDMVDGIVDIVQTGTTLEANGLVEKQHISDINARLITNKAAYFKKSQLIEQFIRSLEVSIANA.

Belongs to the ATP phosphoribosyltransferase family. Short subfamily. In terms of assembly, heteromultimer composed of HisG and HisZ subunits.

The protein localises to the cytoplasm. The catalysed reaction is 1-(5-phospho-beta-D-ribosyl)-ATP + diphosphate = 5-phospho-alpha-D-ribose 1-diphosphate + ATP. The protein operates within amino-acid biosynthesis; L-histidine biosynthesis; L-histidine from 5-phospho-alpha-D-ribose 1-diphosphate: step 1/9. In terms of biological role, catalyzes the condensation of ATP and 5-phosphoribose 1-diphosphate to form N'-(5'-phosphoribosyl)-ATP (PR-ATP). Has a crucial role in the pathway because the rate of histidine biosynthesis seems to be controlled primarily by regulation of HisG enzymatic activity. This chain is ATP phosphoribosyltransferase, found in Staphylococcus aureus (strain bovine RF122 / ET3-1).